The following is a 199-amino-acid chain: Thymidine kinase (199 aa).

Residues 15 to 22 and 88 to 91 each bind ATP; these read GSMFSGKS and DEVQ. Glu-89 functions as the Proton acceptor in the catalytic mechanism. The Zn(2+) site is built by Cys-145, Cys-148, Cys-183, and His-186.

This sequence belongs to the thymidine kinase family. Homotetramer.

It localises to the cytoplasm. The enzyme catalyses thymidine + ATP = dTMP + ADP + H(+). This Staphylococcus saprophyticus subsp. saprophyticus (strain ATCC 15305 / DSM 20229 / NCIMB 8711 / NCTC 7292 / S-41) protein is Thymidine kinase.